Reading from the N-terminus, the 80-residue chain is uncharacterized protein (80 aa).

The next 3 helical transmembrane spans lie at 2–22, 32–52, and 55–75; these read INLW…IGQV, FFGM…LTGG, and LVTG…RFMV.

The protein resides in the cell membrane. This is an uncharacterized protein from Escherichia coli (strain K12).